The sequence spans 305 residues: Ornithine carbamoyltransferase, catabolic (305 aa).

Residues 50 to 53 (STRT), glutamine 77, arginine 101, and 128 to 131 (HPLQ) each bind carbamoyl phosphate. L-ornithine-binding positions include asparagine 159, aspartate 223, and 227 to 228 (SM). Residues 263 to 264 (CL) and arginine 291 contribute to the carbamoyl phosphate site.

This sequence belongs to the aspartate/ornithine carbamoyltransferase superfamily. OTCase family.

The protein localises to the cytoplasm. It catalyses the reaction carbamoyl phosphate + L-ornithine = L-citrulline + phosphate + H(+). The protein operates within amino-acid degradation; L-arginine degradation via ADI pathway; carbamoyl phosphate from L-arginine: step 2/2. Functionally, reversibly catalyzes the transfer of the carbamoyl group from carbamoyl phosphate (CP) to the N(epsilon) atom of ornithine (ORN) to produce L-citrulline. This is Ornithine carbamoyltransferase, catabolic from Thermoplasma acidophilum (strain ATCC 25905 / DSM 1728 / JCM 9062 / NBRC 15155 / AMRC-C165).